The following is a 1013-amino-acid chain: MDLFVYQWFCDGSQEIRAYAVDSDSSTVCVRVTGFRPGFYVETASCQAVTRALQDFRDVSAEKRVRDHLYATRGSSVPFVWVTFRCWFDARKASDVLVKAGFACHQCRAQPVLQLTSLRDLPTCGWIRLGKGAVQVKREKYSRCKREFIVQWEQVERGPDVPQPEVTVVALDLEVNSEVENAMPKDRPGDEVFMAGAIILRPGKKPKRVLLSLEADDYPEAEVLAERGYAVQQYPNERSLISGLCDMLSSVKPQVVTGYNVLGFDIDYLLKRCVRLGMEEELCLTGMAAERPAKERTISWSSSAFGAQKYSYLDWEGVVAVDLLPIIKRDYKFDSYRLDFVTETLLGSNKDPVTAADIFRAYATRKMDVVGEYCVKDVQLCVDLMEKLQVWVGLTEMAKVCRVNAFTLFTQGQQIRIYSQVYCHCEKNGYVVTDPADGKRVPWGQDPPVSDEPDEDYIGAHVVEPSPGIYDNVVPLDFSSLYPSIMIAKNVCYSTRVDPGTPGSETFTWEDHLNCVHDPRKVEYERLSSELWDLDSEARELRRERDAIPRKRVDDRRLVVDTLNTVLDAQRMLRTTRAALKNQLGTKTVCACRLLAFLEPATKKGVMPTILTDLLDGRKRAKKAKAEAKDSITKITMDKRQLAYKVSANSMYGAMGVKRGYLPFQDGAMTVTYFGRQCIEKAASIIGSEHGGQLVYGDTDSNYVTFADAKTPAELWDKAVAVAKAVSSVFPPPISLEFEQVIYTKFLILGKKRYIYLSCDRDGNSSGKMGFRGVLMARRDNSGLARKAYSITAQALLEDRDPWADLTPLMKDMYTKNCSLRDFVITKQVGSWCRECAFIEQGADSIVAVGDYKIRDLEKAKAETRKITGTDGGPEYMAVLYKLVMAQLPGHVQLANRMIGRGETVADGTRLEYVVLRPSYDGKKRRFRGQGLSERLETSDYYKRFAEFLELDTEHYVKTLVNPLDQLLTTAGRPEDEFKAFYGYRVNYRKVVEDIKTLRACPEMVKIVSFKKK.

This sequence belongs to the DNA polymerase type-B family.

It catalyses the reaction DNA(n) + a 2'-deoxyribonucleoside 5'-triphosphate = DNA(n+1) + diphosphate. DNA-directed DNA polymerase involved in viral DNA replication. The sequence is that of Putative DNA polymerase 060R from Dryophytes versicolor (chameleon treefrog).